Reading from the N-terminus, the 216-residue chain is Probable nicotinate-nucleotide adenylyltransferase (216 aa).

Belongs to the NadD family.

It carries out the reaction nicotinate beta-D-ribonucleotide + ATP + H(+) = deamido-NAD(+) + diphosphate. The protein operates within cofactor biosynthesis; NAD(+) biosynthesis; deamido-NAD(+) from nicotinate D-ribonucleotide: step 1/1. Functionally, catalyzes the reversible adenylation of nicotinate mononucleotide (NaMN) to nicotinic acid adenine dinucleotide (NaAD). The protein is Probable nicotinate-nucleotide adenylyltransferase of Geobacillus kaustophilus (strain HTA426).